The primary structure comprises 380 residues: Cytochrome b (380 aa).

The next 4 helical transmembrane spans lie at 34–54 (FGSL…LLAM), 78–99 (WLIR…FLHI), 114–134 (WNTG…GYVL), and 179–199 (FFAL…IHLT). The heme b site is built by histidine 84 and histidine 98. Heme b contacts are provided by histidine 183 and histidine 197. Histidine 202 serves as a coordination point for a ubiquinone. 4 consecutive transmembrane segments (helical) span residues 227-247 (IKDI…TLFS), 289-309 (LGGV…PFLH), 321-341 (LSQT…WIGS), and 348-368 (FIII…ILFP).

It belongs to the cytochrome b family. As to quaternary structure, the cytochrome bc1 complex contains 11 subunits: 3 respiratory subunits (MT-CYB, CYC1 and UQCRFS1), 2 core proteins (UQCRC1 and UQCRC2) and 6 low-molecular weight proteins (UQCRH/QCR6, UQCRB/QCR7, UQCRQ/QCR8, UQCR10/QCR9, UQCR11/QCR10 and a cleavage product of UQCRFS1). This cytochrome bc1 complex then forms a dimer. Requires heme b as cofactor.

The protein resides in the mitochondrion inner membrane. Its function is as follows. Component of the ubiquinol-cytochrome c reductase complex (complex III or cytochrome b-c1 complex) that is part of the mitochondrial respiratory chain. The b-c1 complex mediates electron transfer from ubiquinol to cytochrome c. Contributes to the generation of a proton gradient across the mitochondrial membrane that is then used for ATP synthesis. The polypeptide is Cytochrome b (MT-CYB) (Alectoris graeca (Rock partridge)).